Consider the following 483-residue polypeptide: GTPase Der (483 aa).

2 EngA-type G domains span residues 3–167 (FTLA…GEER) and 212–387 (LRIA…EIWN). GTP is bound by residues 9-16 (GRPNVGKS), 56-60 (DTAGL), 119-122 (NKAE), 218-225 (GRPNAGKS), 265-269 (DTAGM), and 330-333 (NKWD). In terms of domain architecture, KH-like spans 388-472 (RRISTGRLNR…PIRLSLRTSD (85 aa)).

Belongs to the TRAFAC class TrmE-Era-EngA-EngB-Septin-like GTPase superfamily. EngA (Der) GTPase family. Associates with the 50S ribosomal subunit.

Functionally, GTPase that plays an essential role in the late steps of ribosome biogenesis. The chain is GTPase Der from Brucella suis (strain ATCC 23445 / NCTC 10510).